The sequence spans 206 residues: Dephospho-CoA kinase (206 aa).

The DPCK domain occupies 4–200 (TVALTGGIGS…ASYLKLASQF (197 aa)). Residue 12–17 (GSGKST) participates in ATP binding.

Belongs to the CoaE family.

Its subcellular location is the cytoplasm. It catalyses the reaction 3'-dephospho-CoA + ATP = ADP + CoA + H(+). Its pathway is cofactor biosynthesis; coenzyme A biosynthesis; CoA from (R)-pantothenate: step 5/5. Catalyzes the phosphorylation of the 3'-hydroxyl group of dephosphocoenzyme A to form coenzyme A. This is Dephospho-CoA kinase from Salmonella typhimurium (strain LT2 / SGSC1412 / ATCC 700720).